The following is a 122-amino-acid chain: Large ribosomal subunit protein uL14 (122 aa).

The protein belongs to the universal ribosomal protein uL14 family. Part of the 50S ribosomal subunit. Forms a cluster with proteins L3 and L19. In the 70S ribosome, L14 and L19 interact and together make contacts with the 16S rRNA in bridges B5 and B8.

Functionally, binds to 23S rRNA. Forms part of two intersubunit bridges in the 70S ribosome. The sequence is that of Large ribosomal subunit protein uL14 from Spiroplasma citri.